A 77-amino-acid polypeptide reads, in one-letter code: Structural DNA-binding protein p10 (77 aa).

Over residues Met1–Asn12 the composition is skewed to polar residues. Positions Met1–His38 are disordered. Over residues Lys17 to Gly27 the composition is skewed to low complexity.

Belongs to the asfivirus P10 family.

The protein resides in the virion. In terms of biological role, may play a role in genome packaging through direct interaction with viral DNA. Binds to ssDNA and dsDNA with the same apparent affinity in vitro. This is Structural DNA-binding protein p10 from Ornithodoros (relapsing fever ticks).